We begin with the raw amino-acid sequence, 259 residues long: MVGGDEVIANSFLEAGELVSFKRGEDIVSQGDVEDDSVYFLLSGAADVFVNGKRRDDIQRTAPITVGEMSALNPAQKRSATVRAASRQLVALKVEGETFRKVVGENREFLRRVHEDFSGRGRQAILATGISRRTSGWNWTVISLTAGVLSAAAIWYTLRVDGNPVFVRVLLPLVVGLTIFLLTLLADPVYRFFRLGTLCVGAILVDEALQWQVRGSFMGAEFQYQISSSGDPQQATALLAPIVLGALAAYLFWIDTTKR.

M1 to R120 is a binding site for a nucleoside 3',5'-cyclic phosphate. Residues L126–S229 form a TIR-like region. The next 3 helical transmembrane spans lie at G136–Y156, V169–V189, and Q234–I254.

The protein localises to the cell inner membrane. It carries out the reaction NAD(+) + H2O = ADP-D-ribose + nicotinamide + H(+). Its function is as follows. Pycsar (pyrimidine cyclase system for antiphage resistance) provides immunity against bacteriophage. The pyrimidine cyclase (PycC) synthesizes cyclic nucleotides in response to infection; these serve as specific second messenger signals. The signals activate the adjacent effector, leading to bacterial cell death and abortive phage infection. A clade B Pycsar system. The effector gene of a two-gene Pycsar system. Expression of this and adjacent uridylate cyclase RsmPycC (AC A0A1V0HUX5) probably confers resistance to bacteriophage. The genes are probably only expressed in response to bacteriophage infection. Probably only responds to cUMP (produced by its cognate NTP cyclase), it may act by degrading NAD(+) and/or by impairing membrane integrity. The polypeptide is Pycsar effector protein RsmPycTIR (Rhodovulum sp. (strain MB263)).